A 337-amino-acid chain; its full sequence is Annexin E1 (337 aa).

4 Annexin repeats span residues 10 to 80, 81 to 154, 161 to 238, and 242 to 312; these read TGVT…MLYK, PRAQ…AVAT, DTHE…LAHD, and DPCC…LLWE.

The protein belongs to the annexin family.

It localises to the cell projection. It is found in the cilium. The protein resides in the flagellum. In terms of biological role, may function as a calcium-regulated structural element linking phospholipid bilayer and underlying axoneme. The chain is Annexin E1 (ANXE1) from Giardia intestinalis (Giardia lamblia).